We begin with the raw amino-acid sequence, 251 residues long: Aquaporin (251 aa).

Topologically, residues 1–11 (MAGETLRKIQS) are cytoplasmic. The helical transmembrane segment at 12 to 32 (LLGEMVASFIFGFAVYSAILG) threads the bilayer. Topologically, residues 33–42 (STIAQQPAAK) are extracellular. Residues 43 to 63 (VIIGLTVGFSAIGIIYSFSDV) form a helical membrane-spanning segment. Residues 64-86 (TIAHFNPAITLAAILTGKMGILC) lie on the Cytoplasmic side of the membrane. The NPA signature appears at 69 to 71 (NPA). Residues 87–107 (GLGYMLAQCVGFILAVCALLV) traverse the membrane as a helical segment. Residues 108 to 133 (CSPVGYKETLNVIRPAPAPFGADNLN) are Extracellular-facing. The chain crosses the membrane as a helical span at residues 134–154 (VFFTEFFLTAILVHIAFAVAV). At 155-179 (NPYRPKVDTDGKFVDPDEKEPVDRR) the chain is on the cytoplasmic side. A helical transmembrane segment spans residues 180–200 (ITAPLCIGLTLGFLAFMGLVT). Over 201-224 (SGGAFNPGLTLAPVIMSNTWQHFW) the chain is Extracellular. Residues 206–208 (NPG) carry the NPG motif. The chain crosses the membrane as a helical span at residues 225-245 (LYLGAQYLGGLVGGLLQVFVL). Residues 246 to 251 (YKLSSN) lie on the Cytoplasmic side of the membrane.

It belongs to the MIP/aquaporin (TC 1.A.8) family.

It is found in the cell membrane. Water channel required to facilitate the transport of water across membranes. Involved in osmotolerance. The sequence is that of Aquaporin (AQP) from Encephalitozoon hellem (Microsporidian parasite).